A 139-amino-acid polypeptide reads, in one-letter code: Nucleoside diphosphate kinase (139 aa).

6 residues coordinate ATP: K10, F58, R86, T92, R104, and N114. The Pros-phosphohistidine intermediate role is filled by H117.

This sequence belongs to the NDK family. In terms of assembly, homotetramer. Mg(2+) serves as cofactor.

The protein resides in the cytoplasm. The catalysed reaction is a 2'-deoxyribonucleoside 5'-diphosphate + ATP = a 2'-deoxyribonucleoside 5'-triphosphate + ADP. It catalyses the reaction a ribonucleoside 5'-diphosphate + ATP = a ribonucleoside 5'-triphosphate + ADP. In terms of biological role, major role in the synthesis of nucleoside triphosphates other than ATP. The ATP gamma phosphate is transferred to the NDP beta phosphate via a ping-pong mechanism, using a phosphorylated active-site intermediate. The sequence is that of Nucleoside diphosphate kinase from Nocardia farcinica (strain IFM 10152).